A 3433-amino-acid chain; its full sequence is Genome polyprotein (3433 aa).

The tract at residues 2-15 (SKKPGGPGKSRAVN) is interaction with host EXOC1. At 2–105 (SKKPGGPGKS…NRRSSKQKKR (104 aa)) the chain is on the cytoplasmic side. The segment at 37–72 (LIDGRGPTRFVLALLAFFRFTAIAPTRAVLDRWRSV) is hydrophobic; homodimerization of capsid protein C. The propeptide at 106–123 (GGKTGIAFMIGLIAGVGA) is ER anchor for the capsid protein C, removed in mature form by serine protease NS3. The chain crosses the membrane as a helical span at residues 106 to 126 (GGKTGIAFMIGLIAGVGAVTL). At 127–248 (SNFQGKVMMT…KATRYLVKTE (122 aa)) the chain is on the extracellular side. Asn138 is a glycosylation site (N-linked (GlcNAc...) asparagine; by host). The helical transmembrane segment at 249-269 (SWILRNPGYALVAAVIGWMLG) threads the bilayer. The Cytoplasmic portion of the chain corresponds to 270–273 (SNTM). A helical transmembrane segment spans residues 274-290 (QRVVFAVLLLLVAPAYS). Residues 291 to 743 (FNCLGMSNRD…QVFGGAFRSL (453 aa)) are Extracellular-facing. 4 disulfides stabilise this stretch: Cys293–Cys320, Cys350–Cys406, Cys364–Cys395, and Cys382–Cys411. Residues 388-401 (DRGWGNGCGLFGKG) form a fusion peptide region. The N-linked (GlcNAc...) asparagine; by host glycan is linked to Asn444. 2 disulfides stabilise this stretch: Cys480/Cys578 and Cys595/Cys626. The chain crosses the membrane as a helical span at residues 744–764 (FGGMSWITQGLLGALLLWMGI). Residues 765–770 (NARDRS) lie on the Cytoplasmic side of the membrane. A helical membrane pass occupies residues 771–791 (IALTFLAVGGVLLFLSVNVHA). Residues 792–1216 (DTGCAIDISR…AFAESNSGGD (425 aa)) are Extracellular-facing. Disulfide bonds link Cys795–Cys806 and Cys846–Cys934. N-linked (GlcNAc...) asparagine; by host glycosylation is found at Asn921, Asn966, and Asn998. 4 cysteine pairs are disulfide-bonded: Cys970–Cys1014, Cys1071–Cys1120, Cys1082–Cys1103, and Cys1104–Cys1107. Residues 1217-1237 (VVHLALMATFKIQPVFMVASF) form a helical membrane-spanning segment. The Cytoplasmic segment spans residues 1238–1247 (LKARWTNQEN). A helical transmembrane segment spans residues 1248–1268 (ILLMLAAAFFQMAYYDARQIL). Topologically, residues 1269–1288 (LWEMPDVLNSLAVAWMILRA) are lumenal. A helical transmembrane segment spans residues 1289-1309 (ITFTTTSNVVVPLLALLTPGL). The Cytoplasmic segment spans residues 1310 to 1316 (RCLNLDV). The chain crosses the membrane as a helical span at residues 1317–1335 (YRILLLMVGIGSLIREKRS). At 1336-1345 (AAAKKKGASL) the chain is on the lumenal side. The helical transmembrane segment at 1346 to 1366 (LCLALASTGFFNPMILAAGLV) threads the bilayer. The Cytoplasmic segment spans residues 1367 to 1375 (ACDPNRKRG). Residues 1376 to 1396 (WPATEVMTAVGLMFAIVGGLA) form a helical membrane-spanning segment. The Lumenal segment spans residues 1397 to 1399 (ELD). Residues 1400 to 1420 (IDSMAIPMTIAGLMFAAFVIS) form a helical membrane-spanning segment. Over 1421–1477 (GKSTDMWIERTADISWEGDAEITGSSERVDVRLDDDGNFQLMNDPGAPWKIWMLRMA) the chain is Cytoplasmic. The tract at residues 1428–1467 (IERTADISWEGDAEITGSSERVDVRLDDDGNFQLMNDPGA) is interacts with and activates NS3 protease. Residues 1478-1498 (CLAISAYTPWAILPSVVGFWI) constitute an intramembrane region (helical). The Cytoplasmic segment spans residues 1499-2174 (TLQYTKRGGV…RMALEELPDA (676 aa)). The 178-residue stretch at 1506 to 1683 (GGVLWDTPSP…ERMDEPVPAG (178 aa)) folds into the Peptidase S7 domain. Residues His1556, Asp1580, and Ser1640 each act as charge relay system; for serine protease NS3 activity in the active site. Residues 1686–1842 (PEMLRKKQIT…ESNAPISDLQ (157 aa)) form the Helicase ATP-binding domain. Residues 1690–1693 (RKKQ) form an important for RNA-binding region. Residue 1699–1706 (LHPGAGKT) participates in ATP binding. Positions 1790–1793 (DEAH) match the DEAH box motif. Residues 1853-2018 (GYEWITEYIG…GLIAQFYQPE (166 aa)) enclose the Helicase C-terminal domain. Lys1894 is subject to N6-acetyllysine; by host. Positions 2169–2173 (EELPD) are regulates the ATPase activity of NS3 helicase. A helical transmembrane segment spans residues 2175–2195 (LQTIALIALLSVMTMGVFFLL). Over 2196-2200 (MQRKG) the chain is Lumenal. Residues 2201–2221 (IGKIGLGGVVLGAATFFCWMA) constitute an intramembrane region (helical). Glu2222 is a topological domain (lumenal). A helical membrane pass occupies residues 2223 to 2243 (VPGTKIAGMLLLSLLLMIVLI). Over 2244 to 2258 (PEPEKQRSQTDNQLA) the chain is Cytoplasmic. Residues 2259-2273 (VFLICVLTLVGAVAA) form a helical membrane-spanning segment. Residues 2274–2312 (NEMGWLDKTKSDISGLFGQRIETKENFSIGEFLLDLRPA) are Lumenal-facing. The helical intramembrane region spans 2313-2333 (TAWSLYAVTTAVLTPLLKHLI). Residues 2334–2380 (TSDYITTSLTSINVQASALFTLARGFPFVDVGVSALLLAAGCWGQVT) lie on the Lumenal side of the membrane. A helical membrane pass occupies residues 2381-2401 (LTVTVTSATLLFCHYAYMVPG). At 2402–2444 (WQAEAMRSAQRRTAAGIMKNAVVDGIVATDVPELERTTPIMQK) the chain is on the cytoplasmic side. A helical membrane pass occupies residues 2445–2465 (KVGQVMLILVSLAALVVNPSV). Over 2466–2470 (KTVRE) the chain is Lumenal. Residues 2471 to 2491 (AGILITAAAVTLWENGASSVW) traverse the membrane as a helical segment. Over 2492–3433 (NATTAIGLCH…DTTLVEDTVL (942 aa)) the chain is Cytoplasmic. Residues 2529 to 2794 (GGAKGRTLGE…DVNLGSGTRA (266 aa)) enclose the mRNA cap 0-1 NS5-type MT domain. Ser2584 contacts S-adenosyl-L-methionine. Ser2584 carries the phosphoserine modification. Lys2589 acts as the For 2'-O-MTase activity in catalysis. Positions 2614, 2615, 2632, 2633, 2659, and 2660 each coordinate S-adenosyl-L-methionine. The active-site For 2'-O-MTase activity is Asp2674. S-adenosyl-L-methionine is bound at residue Ile2675. Active-site for 2'-O-MTase activity residues include Lys2710 and Glu2746. Tyr2748 contacts S-adenosyl-L-methionine. The Nuclear localization signal motif lies at 2917–2919 (REK). Zn(2+)-binding residues include Glu2968, His2972, Cys2977, and Cys2980. Positions 3058–3210 (GRIYADDTAG…KPLDDRFATS (153 aa)) constitute a RdRp catalytic domain. 3 residues coordinate Zn(2+): His3245, Cys3261, and Cys3380. Positions 3431-3433 (TVL) match the PDZ-binding motif.

The protein in the N-terminal section; belongs to the class I-like SAM-binding methyltransferase superfamily. mRNA cap 0-1 NS5-type methyltransferase family. As to quaternary structure, homodimer; further assembles as a homotetramer. Interacts (via N-terminus) with host EXOC1 (via C-terminus); this interaction results in EXOC1 degradation through the proteasome degradation pathway. In terms of assembly, forms heterodimers with envelope protein E in the endoplasmic reticulum and Golgi. Homodimer; in the endoplasmic reticulum and Golgi. Interacts with protein prM. Interacts with non-structural protein 1. As to quaternary structure, homodimer; Homohexamer when secreted. Interacts with envelope protein E. NS1 interacts with NS4B. Interacts with host complement protein CFH; this interaction leads to the degradation of C3. In terms of assembly, interacts (via N-terminus) with serine protease NS3. Forms a heterodimer with serine protease NS3. May form homooligomers. As to quaternary structure, forms a heterodimer with NS2B. Interacts with non-structural protein 2A (via N-terminus). Interacts with NS4B. Interacts with unphosphorylated RNA-directed RNA polymerase NS5; this interaction stimulates RNA-directed RNA polymerase NS5 guanylyltransferase activity. In terms of assembly, interacts with Serine protease/Helicase NS3. Interacts with NS1. Homodimer. Interacts with host STAT2; this interaction inhibits the phosphorylation of the latter, and, when all viral proteins are present (polyprotein), targets STAT2 for degradation. Interacts with serine protease NS3. In terms of processing, specific enzymatic cleavages in vivo yield mature proteins. Cleavages in the lumen of endoplasmic reticulum are performed by host signal peptidase, whereas cleavages in the cytoplasmic side are performed by serine protease NS3. Signal cleavage at the 2K-4B site requires a prior NS3 protease-mediated cleavage at the 4A-2K site. Cleaved in post-Golgi vesicles by a host furin, releasing the mature small envelope protein M, and peptide pr. This cleavage is incomplete as up to 30% of viral particles still carry uncleaved prM. Post-translationally, N-glycosylated. In terms of processing, N-glycosylated. The excreted form is glycosylated and this is required for efficient secretion of the protein from infected cells. Acetylated by host KAT5. Acetylation modulates NS3 RNA-binding and unwinding activities and plays an important positive role for viral replication. Post-translationally, phosphorylated on serines residues. This phosphorylation may trigger NS5 nuclear localization.

It is found in the virion. Its subcellular location is the host nucleus. The protein localises to the host cytoplasm. It localises to the host perinuclear region. The protein resides in the secreted. It is found in the virion membrane. Its subcellular location is the host endoplasmic reticulum membrane. The enzyme catalyses Selective hydrolysis of -Xaa-Xaa-|-Yaa- bonds in which each of the Xaa can be either Arg or Lys and Yaa can be either Ser or Ala.. It carries out the reaction RNA(n) + a ribonucleoside 5'-triphosphate = RNA(n+1) + diphosphate. The catalysed reaction is a ribonucleoside 5'-triphosphate + H2O = a ribonucleoside 5'-diphosphate + phosphate + H(+). It catalyses the reaction ATP + H2O = ADP + phosphate + H(+). The enzyme catalyses a 5'-end (5'-triphosphoguanosine)-ribonucleoside in mRNA + S-adenosyl-L-methionine = a 5'-end (N(7)-methyl 5'-triphosphoguanosine)-ribonucleoside in mRNA + S-adenosyl-L-homocysteine. It carries out the reaction a 5'-end (N(7)-methyl 5'-triphosphoguanosine)-ribonucleoside in mRNA + S-adenosyl-L-methionine = a 5'-end (N(7)-methyl 5'-triphosphoguanosine)-(2'-O-methyl-ribonucleoside) in mRNA + S-adenosyl-L-homocysteine + H(+). Its function is as follows. Plays a role in virus budding by binding to the cell membrane and gathering the viral RNA into a nucleocapsid that forms the core of a mature virus particle. During virus entry, may induce genome penetration into the host cytoplasm after hemifusion induced by the surface proteins. Can migrate to the cell nucleus where it modulates host functions. Overcomes the anti-viral effects of host EXOC1 by sequestering and degrading the latter through the proteasome degradation pathway. Inhibits RNA silencing by interfering with host Dicer. Functionally, prevents premature fusion activity of envelope proteins in trans-Golgi by binding to envelope protein E at pH6.0. After virion release in extracellular space, gets dissociated from E dimers. In terms of biological role, acts as a chaperone for envelope protein E during intracellular virion assembly by masking and inactivating envelope protein E fusion peptide. prM is the only viral peptide matured by host furin in the trans-Golgi network probably to avoid catastrophic activation of the viral fusion activity in acidic Golgi compartment prior to virion release. prM-E cleavage is inefficient, and many virions are only partially matured. These uncleaved prM would play a role in immune evasion. Its function is as follows. May play a role in virus budding. Exerts cytotoxic effects by activating a mitochondrial apoptotic pathway through M ectodomain. May display a viroporin activity. Binds to host cell surface receptor and mediates fusion between viral and cellular membranes. Envelope protein is synthesized in the endoplasmic reticulum in the form of heterodimer with protein prM. They play a role in virion budding in the ER, and the newly formed immature particle is covered with 60 spikes composed of heterodimer between precursor prM and envelope protein E. The virion is transported to the Golgi apparatus where the low pH causes dissociation of PrM-E heterodimers and formation of E homodimers. prM-E cleavage is inefficient, and many virions are only partially matured. These uncleaved prM would play a role in immune evasion. Functionally, involved in immune evasion, pathogenesis and viral replication. Once cleaved off the polyprotein, is targeted to three destinations: the viral replication cycle, the plasma membrane and the extracellular compartment. Essential for viral replication. Required for formation of the replication complex and recruitment of other non-structural proteins to the ER-derived membrane structures. Excreted as a hexameric lipoparticle that plays a role against host immune response. Antagonizing the complement function. Binds to the host macrophages and dendritic cells. Inhibits signal transduction originating from Toll-like receptor 3 (TLR3). In terms of biological role, component of the viral RNA replication complex that functions in virion assembly and antagonizes the host alpha/beta interferon antiviral response. Inhibits STAT2 translocation in the nucleus after IFN-alpha treatment. Its function is as follows. Required cofactor for the serine protease function of NS3. May have membrane-destabilizing activity and form viroporins. Inhibits STAT2 translocation in the nucleus after IFN-alpha treatment. Displays three enzymatic activities: serine protease, NTPase and RNA helicase. NS3 serine protease, in association with NS2B, performs its autocleavage and cleaves the polyprotein at dibasic sites in the cytoplasm: C-prM, NS2A-NS2B, NS2B-NS3, NS3-NS4A, NS4A-2K and NS4B-NS5. NS3 RNA helicase binds RNA and unwinds dsRNA in the 3' to 5' direction. NS3 supports the separation of RNA daughter and template strands during viral replication. The helicase part is involved in the inhibition of phosphorylation of host STAT1, and thereby inhibition of host type-I IFN signaling. In addition, NS3 assists the initiation of replication by unwinding the RNA secondary structure in the 3' non-translated region (NTR). Inhibits STAT2 translocation in the nucleus after IFN-alpha treatment. Functionally, regulates the ATPase activity of the NS3 helicase activity. NS4A allows NS3 helicase to conserve energy during unwinding. Induces host ER membrane rearrangements to provide a compartment where viral replication can take part. Inhibits STAT2 translocation in the nucleus after IFN-alpha treatment. In terms of biological role, functions as a signal peptide for NS4B and is required for the interferon antagonism activity of the latter. Its function is as follows. Induces the formation of ER-derived membrane vesicles where the viral replication takes place. Inhibits interferon (IFN)-induced host STAT1 phosphorylation and nuclear translocation, thereby preventing the establishment of cellular antiviral state by blocking the IFN-alpha/beta pathway. Inhibits STAT2 translocation in the nucleus after IFN-alpha treatment. Replicates the viral (+) and (-) genome, and performs the capping of genomes in the cytoplasm. NS5 methylates viral RNA cap at guanine N-7 and ribose 2'-O positions. Besides its role in genome replication, also prevents the establishment of cellular antiviral state by blocking the interferon-alpha/beta (IFN-alpha/beta) signaling pathway. Inhibits host JAK1 and TYK2 phosphorylation, thereby preventing activation of JAK-STAT signaling pathway. May transcriptionally regulate host genes involved in antiviral response when localized in the nucleus. The protein is Genome polyprotein of Ciconiiformes (storks and others).